The chain runs to 162 residues: Phospholipase A and acyltransferase 3 (162 aa).

Over 1–133 the chain is Cytoplasmic; sequence MRAPIPEPKP…VARSDQVRDV (133 aa). An LRAT domain is found at 13-129; that stretch reads LIEIFRPFYR…LRYGVARSDQ (117 aa). Catalysis depends on residues His-23 and His-35. Cys-113 acts as the Acyl-thioester intermediate in catalysis. A helical membrane pass occupies residues 134–154; it reads IIAASAAGMGLAAMSLIGVMF. The Lumenal segment spans residues 155-162; the sequence is SRNKRQKQ.

This sequence belongs to the H-rev107 family. Interacts with PPP2R1A; this interaction might decrease PP2A activity.

The protein resides in the cell membrane. It localises to the cytoplasm. The protein localises to the cytosol. Its subcellular location is the perinuclear region. It is found in the peroxisome membrane. The protein resides in the mitochondrion membrane. It localises to the nucleus envelope. The protein localises to the lysosome membrane. Its subcellular location is the endoplasmic reticulum membrane. It catalyses the reaction a 1,2-diacyl-sn-glycero-3-phosphocholine + H2O = a 1-acyl-sn-glycero-3-phosphocholine + a fatty acid + H(+). The catalysed reaction is a 1,2-diacyl-sn-glycero-3-phosphocholine + H2O = a 2-acyl-sn-glycero-3-phosphocholine + a fatty acid + H(+). The enzyme catalyses 1,2-dihexadecanoyl-sn-glycero-3-phosphocholine + H2O = 1-hexadecanoyl-sn-glycero-3-phosphocholine + hexadecanoate + H(+). It carries out the reaction 1,2-dihexadecanoyl-sn-glycero-3-phosphocholine + H2O = 2-hexadecanoyl-sn-glycero-3-phosphocholine + hexadecanoate + H(+). It catalyses the reaction 1-hexadecanoyl-2-(9Z-octadecenoyl)-sn-glycero-3-phosphocholine + H2O = 2-(9Z-octadecenoyl)-sn-glycero-3-phosphocholine + hexadecanoate + H(+). The catalysed reaction is 1-hexadecanoyl-2-(9Z-octadecenoyl)-sn-glycero-3-phosphocholine + H2O = 1-hexadecanoyl-sn-glycero-3-phosphocholine + (9Z)-octadecenoate + H(+). The enzyme catalyses 1-hexadecanoyl-2-(5Z,8Z,11Z,14Z-eicosatetraenoyl)-sn-glycero-3-phosphocholine + H2O = 1-hexadecanoyl-sn-glycero-3-phosphocholine + (5Z,8Z,11Z,14Z)-eicosatetraenoate + H(+). It carries out the reaction 1-hexadecanoyl-2-(5Z,8Z,11Z,14Z-eicosatetraenoyl)-sn-glycero-3-phosphocholine + H2O = 2-(5Z,8Z,11Z,14Z)-eicosatetraenoyl-sn-glycero-3-phosphocholine + hexadecanoate + H(+). It catalyses the reaction 1-hexadecanoyl-2-(9Z,12Z-octadecadienoyl)-sn-glycero-3-phosphoethanolamine + H2O = 1-hexadecanoyl-sn-glycero-3-phosphoethanolamine + (9Z,12Z)-octadecadienoate + H(+). The catalysed reaction is 1-hexadecanoyl-2-(9Z,12Z-octadecadienoyl)-sn-glycero-3-phosphoethanolamine + H2O = 2-(9Z,12Z)-octadecadienoyl-sn-glycero-3-phosphoethanolamine + hexadecanoate + H(+). The enzyme catalyses 1-hexadecanoyl-2-(5Z,8Z,11Z,14Z-eicosatetraenoyl)-sn-glycero-3-phosphoethanolamine + H2O = 1-hexadecanoyl-sn-glycero-3-phosphoethanolamine + (5Z,8Z,11Z,14Z)-eicosatetraenoate + H(+). It carries out the reaction 1-hexadecanoyl-2-(5Z,8Z,11Z,14Z-eicosatetraenoyl)-sn-glycero-3-phosphoethanolamine + H2O = 2-(5Z,8Z,11Z,14Z)-eicosatetraenoyl-sn-glycero-3-phosphoethanolamine + hexadecanoate + H(+). It catalyses the reaction 1-hexanoyl-2-acyl-sn-glycero-3-phosphocholine + H2O = hexanoate + a 2-acyl-sn-glycero-3-phosphocholine + H(+). The catalysed reaction is 1-hexanoyl-2-acyl-sn-glycero-3-phosphocholine + H2O = 1-hexanoyl-sn-glycero-3-phosphocholine + a fatty acid + H(+). The enzyme catalyses 1,2-diheptadecanoyl-sn-glycero-3-phosphoethanolamine + 1-(9Z-octadecenoyl)-2-hexadecanoyl-sn-glycero-3-phosphocholine = 1,2-diheptadecanoyl-sn-glycero-3-phospho-N-hexadecanoyl-ethanolamine + 1-(9Z-octadecenoyl)-sn-glycero-3-phosphocholine + H(+). It carries out the reaction 1,2-diheptadecanoyl-sn-glycero-3-phosphoethanolamine + 1-(9Z-octadecenoyl)-2-hexadecanoyl-sn-glycero-3-phosphocholine = 1,2-diheptadecanoyl-sn-glycero-3-phospho-N-(9Z-octadecenoyl)-ethanolamine + 2-hexadecanoyl-sn-glycero-3-phosphocholine + H(+). It catalyses the reaction 1,2-dihexanoyl-sn-glycero-3-phosphoethanolamine + 2-heptanoyl-sn-glycero-3-phosphocholine = hexanoyl-sn-glycero-3-phosphoethanolamine + 1-hexanoyl-2-heptanoyl-sn-glycero-3-phosphocholine. The catalysed reaction is 1-hexadecanoyl-2-octadecanoyl-sn-glycero-3-phosphocholine + H2O = octadecanoate + 1-hexadecanoyl-sn-glycero-3-phosphocholine + H(+). The enzyme catalyses 1-hexadecanoyl-2-octadecanoyl-sn-glycero-3-phosphocholine + H2O = 2-octadecanoyl-sn-glycero-3-phosphocholine + hexadecanoate + H(+). It carries out the reaction 1-octadecanoyl-2-hexadecanoyl-sn-glycero-3-phosphocholine + H2O = 1-octadecanoyl-sn-glycero-3-phosphocholine + hexadecanoate + H(+). It catalyses the reaction 1-octadecanoyl-2-hexadecanoyl-sn-glycero-3-phosphocholine + H2O = 2-hexadecanoyl-sn-glycero-3-phosphocholine + octadecanoate + H(+). The catalysed reaction is 1-hexadecanoyl-2-(9Z,12Z-octadecadienoyl)-sn-glycero-3-phosphocholine + H2O = (9Z,12Z)-octadecadienoate + 1-hexadecanoyl-sn-glycero-3-phosphocholine + H(+). The enzyme catalyses 1-hexadecanoyl-2-(9Z,12Z-octadecadienoyl)-sn-glycero-3-phosphocholine + H2O = 2-(9Z,12Z-octadecadienoyl)-sn-glycero-3-phosphocholine + hexadecanoate + H(+). It carries out the reaction 1,2-di-(9Z-octadecenoyl)-sn-glycero-3-phosphocholine + H2O = 2-(9Z-octadecenoyl)-sn-glycero-3-phosphocholine + (9Z)-octadecenoate + H(+). It catalyses the reaction 1,2-dihexadecanoyl-sn-glycero-3-phosphocholine + H2O = hexadecanoyl-sn-glycero-3-phosphocholine + hexadecanoate + H(+). The catalysed reaction is 1,2-di-(9Z-octadecenoyl)-sn-glycero-3-phosphocholine + H2O = 1-(9Z-octadecenoyl)-sn-glycero-3-phosphocholine + (9Z)-octadecenoate + H(+). The enzyme catalyses 1,2-di-(9Z-octadecenoyl)-sn-glycero-3-phosphoethanolamine + 1,2-dihexadecanoyl-sn-glycero-3-phosphocholine = hexadecanoyl-sn-glycero-3-phosphocholine + N-hexadecanoyl-1,2-di-(9Z-octadecenoyl)-sn-glycero-3-phosphoethanolamine + H(+). It carries out the reaction 1,2-di-(9Z,12Z-octadecadienoyl)-sn-glycero-3-phosphocholine + H2O = 1-(9Z,12Z)-octadecadienoyl-sn-glycero-3-phosphocholine + (9Z,12Z)-octadecadienoate + H(+). In terms of biological role, exhibits both phospholipase A1/2 and acyltransferase activities. Shows phospholipase A1 (PLA1) and A2 (PLA2), catalyzing the calcium-independent release of fatty acids from the sn-1 or sn-2 position of glycerophospholipids. For most substrates, PLA1 activity is much higher than PLA2 activity. Shows O-acyltransferase activity, catalyzing the transfer of a fatty acyl group from glycerophospholipid to the hydroxyl group of lysophospholipid. Shows N-acyltransferase activity, catalyzing the calcium-independent transfer of a fatty acyl group at the sn-1 position of phosphatidylcholine (PC) and other glycerophospholipids to the primary amine of phosphatidylethanolamine (PE), forming N-acylphosphatidylethanolamine (NAPE), which serves as precursor for N-acylethanolamines (NAEs). Exhibits high N-acyltransferase activity and low phospholipase A1/2 activity. Required for complete organelle rupture and degradation that occur during eye lens terminal differentiation, when fiber cells that compose the lens degrade all membrane-bound organelles in order to provide lens with transparency to allow the passage of light. Organelle membrane degradation is probably catalyzed by the phospholipase activity. Plays a role in phospholipid metabolism and adipogenesis. The chain is Phospholipase A and acyltransferase 3 from Pongo abelii (Sumatran orangutan).